A 480-amino-acid polypeptide reads, in one-letter code: UDP-glucose 6-dehydrogenase 3 (480 aa).

NAD(+) contacts are provided by residues 8-13, D33, R38, 86-90, 127-128, and E161; these read GAGYVG, VNTPT, and ST. Residues 157–161, 216–223, and 256–269 contribute to the substrate site; these read EFLAE, KLAANAFL, and RIGP…VGFG. C272 acts as the Nucleophile in catalysis. 272–275 serves as a coordination point for NAD(+); it reads CFQK. 334–335 provides a ligand contact to substrate; it reads FK. R342 serves as a coordination point for NAD(+). Position 447 (R447) interacts with substrate.

This sequence belongs to the UDP-glucose/GDP-mannose dehydrogenase family.

The catalysed reaction is UDP-alpha-D-glucose + 2 NAD(+) + H2O = UDP-alpha-D-glucuronate + 2 NADH + 3 H(+). Its pathway is nucleotide-sugar biosynthesis; UDP-alpha-D-glucuronate biosynthesis; UDP-alpha-D-glucuronate from UDP-alpha-D-glucose: step 1/1. With respect to regulation, inhibited by UDP-xylose. Functionally, involved in the biosynthesis of UDP-glucuronic acid (UDP-GlcA), providing nucleotide sugars for cell-wall polymers. Required for the formation of cell wall ingrowths on the outer cell walls of nematode-induced syncytia. The polypeptide is UDP-glucose 6-dehydrogenase 3 (UGD3) (Arabidopsis thaliana (Mouse-ear cress)).